A 538-amino-acid chain; its full sequence is Endoglucanase 16 (538 aa).

Residues 1–26 form the signal peptide; the sequence is MRWRRVGDVVAVALLLGAAAAAAAAA. Aspartate 83 functions as the Nucleophile in the catalytic mechanism. Catalysis depends on residues histidine 431, aspartate 483, and glutamate 492. Positions 513 to 538 are disordered; that stretch reads RQESPSTTTTTTATTSSPEMGLSVNR. The segment covering 516–530 has biased composition (low complexity); it reads SPSTTTTTTATTSSP.

Belongs to the glycosyl hydrolase 9 (cellulase E) family.

It is found in the secreted. It catalyses the reaction Endohydrolysis of (1-&gt;4)-beta-D-glucosidic linkages in cellulose, lichenin and cereal beta-D-glucans.. This chain is Endoglucanase 16, found in Oryza sativa subsp. japonica (Rice).